Consider the following 140-residue polypeptide: Organic hydroperoxide resistance protein-like (140 aa).

Belongs to the OsmC/Ohr family.

This is Organic hydroperoxide resistance protein-like from Staphylococcus aureus (strain MSSA476).